A 434-amino-acid chain; its full sequence is Methylenetetrahydrofolate--tRNA-(uracil-5-)-methyltransferase TrmFO (434 aa).

9–14 lines the FAD pocket; the sequence is GAGLAG.

This sequence belongs to the MnmG family. TrmFO subfamily. The cofactor is FAD.

The protein localises to the cytoplasm. The catalysed reaction is uridine(54) in tRNA + (6R)-5,10-methylene-5,6,7,8-tetrahydrofolate + NADH + H(+) = 5-methyluridine(54) in tRNA + (6S)-5,6,7,8-tetrahydrofolate + NAD(+). It catalyses the reaction uridine(54) in tRNA + (6R)-5,10-methylene-5,6,7,8-tetrahydrofolate + NADPH + H(+) = 5-methyluridine(54) in tRNA + (6S)-5,6,7,8-tetrahydrofolate + NADP(+). Functionally, catalyzes the folate-dependent formation of 5-methyl-uridine at position 54 (M-5-U54) in all tRNAs. The protein is Methylenetetrahydrofolate--tRNA-(uracil-5-)-methyltransferase TrmFO of Listeria monocytogenes serotype 4b (strain F2365).